The sequence spans 50 residues: Defensin D1 (50 aa).

Intrachain disulfides connect C3–C50, C14–C35, C20–C44, and C24–C46.

In terms of processing, contains 4 disulfide bonds.

The protein resides in the secreted. In terms of biological role, antimicrobial peptide active against fungi, Gram-positive and Gram-negative bacteria. Inhibits growth of hyphae in the fungi A.niger (IC(50)=3.5 ug/ml), B.sorokiniana (IC(50)=3.0 ug/ml), F.oxysporum (IC(50)=9.5 ug/ml), F.graminearum (IC(50)=6.9 ug/ml), F.culmorum (IC(50)=6.9 ug/ml) and B.cinerea (IC(50)=27.4 ug/ml). Has no effect on spore germination. Destroys spores in germinated conidia by disruption of cell walls and membranes in A.niger and B.sorokiniana. Causes vacuolization of germinated macro- and microconidia in F.oxysporum, F.graminearum and F.culmorum. Strongly inhibits growth of P.infestans on potato tubers above concentrations of 13.6 ug/ml. Inhibits growth of Gram-positive bacteria C.michiganensis and B.subtilis and of Gram-negative bacteria P.syringae, E.carotovora and E.coli. The polypeptide is Defensin D1 (Nigella sativa (Black cumin)).